We begin with the raw amino-acid sequence, 115 residues long: SOSS complex subunit C homolog (115 aa).

Belongs to the SOSS-C family.

This is SOSS complex subunit C homolog from Drosophila mojavensis (Fruit fly).